We begin with the raw amino-acid sequence, 187 residues long: Transcription antitermination protein NusB (187 aa).

Residues 135-187 (APAPESVAEEADEESSDSDAAASDPTDEGDVSDSSGASDEPAAPSAEIQPTVD) are disordered. The segment covering 141 to 151 (VAEEADEESSD) has biased composition (acidic residues).

This sequence belongs to the NusB family.

Its function is as follows. Involved in transcription antitermination. Required for transcription of ribosomal RNA (rRNA) genes. Binds specifically to the boxA antiterminator sequence of the ribosomal RNA (rrn) operons. This is Transcription antitermination protein NusB from Bifidobacterium longum subsp. infantis (strain ATCC 15697 / DSM 20088 / JCM 1222 / NCTC 11817 / S12).